Here is a 313-residue protein sequence, read N- to C-terminus: Homoserine O-acetyltransferase (313 aa).

The Acyl-thioester intermediate role is filled by C144. Positions 165 and 194 each coordinate substrate. The Proton acceptor role is filled by H236. The active site involves E238. Residue R250 participates in substrate binding.

The protein belongs to the MetA family.

Its subcellular location is the cytoplasm. The catalysed reaction is L-homoserine + acetyl-CoA = O-acetyl-L-homoserine + CoA. It participates in amino-acid biosynthesis; L-methionine biosynthesis via de novo pathway; O-acetyl-L-homoserine from L-homoserine: step 1/1. Transfers an acetyl group from acetyl-CoA to L-homoserine, forming acetyl-L-homoserine. This is Homoserine O-acetyltransferase from Jannaschia sp. (strain CCS1).